Reading from the N-terminus, the 331-residue chain is Pyruvate dehydrogenase E1 component subunit beta (331 aa).

Position 60 (glutamate 60) interacts with thiamine diphosphate. K(+) contacts are provided by leucine 113, alanine 161, isoleucine 162, aspartate 164, and asparagine 166.

As to quaternary structure, heterodimer of an alpha and a beta chain. Requires thiamine diphosphate as cofactor.

It is found in the plastid. The protein resides in the chloroplast. The catalysed reaction is N(6)-[(R)-lipoyl]-L-lysyl-[protein] + pyruvate + H(+) = N(6)-[(R)-S(8)-acetyldihydrolipoyl]-L-lysyl-[protein] + CO2. The pyruvate dehydrogenase complex catalyzes the overall conversion of pyruvate to acetyl-CoA and CO(2). It contains multiple copies of three enzymatic components: pyruvate dehydrogenase (E1), dihydrolipoamide acetyltransferase (E2) and lipoamide dehydrogenase (E3). The polypeptide is Pyruvate dehydrogenase E1 component subunit beta (pdhB) (Porphyra purpurea (Red seaweed)).